Consider the following 433-residue polypeptide: tRNA-2-methylthio-N(6)-dimethylallyladenosine synthase (433 aa).

Residues 3–118 (KKLFIQTLGC…ISTAVKTPKF (116 aa)) form the MTTase N-terminal domain. Residues Cys12, Cys49, Cys81, Cys150, Cys154, and Cys157 each contribute to the [4Fe-4S] cluster site. In terms of domain architecture, Radical SAM core spans 136–369 (RGSPYKSHIN…QSRHNEILDE (234 aa)). Positions 372 to 433 (AAQEGKILDV…RMVLYGELAN (62 aa)) constitute a TRAM domain.

Belongs to the methylthiotransferase family. MiaB subfamily. As to quaternary structure, monomer. The cofactor is [4Fe-4S] cluster.

Its subcellular location is the cytoplasm. It carries out the reaction N(6)-dimethylallyladenosine(37) in tRNA + (sulfur carrier)-SH + AH2 + 2 S-adenosyl-L-methionine = 2-methylsulfanyl-N(6)-dimethylallyladenosine(37) in tRNA + (sulfur carrier)-H + 5'-deoxyadenosine + L-methionine + A + S-adenosyl-L-homocysteine + 2 H(+). Functionally, catalyzes the methylthiolation of N6-(dimethylallyl)adenosine (i(6)A), leading to the formation of 2-methylthio-N6-(dimethylallyl)adenosine (ms(2)i(6)A) at position 37 in tRNAs that read codons beginning with uridine. The polypeptide is tRNA-2-methylthio-N(6)-dimethylallyladenosine synthase (Campylobacter curvus (strain 525.92)).